The primary structure comprises 40 residues: RapK inhibitor (40 aa).

2 consecutive propeptides follow at residues 1–34 and glycine 40; that span reads MKKLVLCVSILAVILSGVALTQLSTDSPSNIQVA.

This sequence belongs to the Phr family. Post-translationally, contains a predicted signal peptide cleavage site in the N-terminal region, however the propeptide is probably only subject to processing events at the ends of the mature peptide.

The protein localises to the secreted. It localises to the cytoplasm. In terms of biological role, signaling molecule involved in the regulation of genetic competence development. Secreted during production, but the mature peptide acts intracellularly, indicating that it needs to be imported into the cell to function. Stimulates expression of the genes controlled by ComA, a transcriptional factor that regulates the development of genetic competence. Acts by inhibiting RapK, which regulates the activity of ComA. This is RapK inhibitor (phrK) from Bacillus subtilis (strain 168).